A 67-amino-acid polypeptide reads, in one-letter code: Small ribosomal subunit protein eS31 (67 aa).

Residues Cys-31, Cys-34, Cys-49, and Cys-52 each coordinate Zn(2+). A C4-type zinc finger spans residues 31-52 (CPKCGAGVFMAEHLNRFACGKC).

Belongs to the eukaryotic ribosomal protein eS31 family. As to quaternary structure, part of the 30S ribosomal subunit. Zn(2+) serves as cofactor.

This is Small ribosomal subunit protein eS31 from Methanococcus maripaludis (strain C7 / ATCC BAA-1331).